A 219-amino-acid chain; its full sequence is Small ribosomal subunit protein uS3 (219 aa).

The KH type-2 domain maps to 38-106 (IREYITARLK…RVHINILEVK (69 aa)).

It belongs to the universal ribosomal protein uS3 family. Part of the 30S ribosomal subunit. Forms a tight complex with proteins S10 and S14.

Its function is as follows. Binds the lower part of the 30S subunit head. Binds mRNA in the 70S ribosome, positioning it for translation. This Bacillus cytotoxicus (strain DSM 22905 / CIP 110041 / 391-98 / NVH 391-98) protein is Small ribosomal subunit protein uS3.